The chain runs to 258 residues: Transcription factor TT2 (258 aa).

HTH myb-type domains are found at residues 11-63 (REEL…KNYL) and 64-118 (RPGI…RKRL). 2 consecutive DNA-binding regions (H-T-H motif) follow at residues 39-63 (WSTL…KNYL) and 91-114 (WSLI…NSNL). Residue 47–54 (GLKRCGKS) participates in ATP binding.

In terms of assembly, interacts with BHLH2/EGL3/MYC146, BHLH12/MYC1 and BHLH42/TT8. As to expression, expressed at a high level in immature siliques and at a lower level in flowers. Undetected in young seedlings, roots, leaves and inflorescence stems.

It localises to the nucleus. Functionally, transcription activator, when associated with BHLH2/EGL3/MYC146, BHLH12/MYC1, or BHLH42/TT8. Involved in the control of flavonoid late metabolism in developing siliques. Plays a key role in determining the tissue-specific activation of leucoanthocyanidin reductase (BANYULS). The protein is Transcription factor TT2 (TT2) of Arabidopsis thaliana (Mouse-ear cress).